Reading from the N-terminus, the 526-residue chain is ATP synthase subunit alpha (526 aa).

Position 171-178 (171-178 (GDRQTGKT)) interacts with ATP.

Belongs to the ATPase alpha/beta chains family. As to quaternary structure, F-type ATPases have 2 components, CF(1) - the catalytic core - and CF(0) - the membrane proton channel. CF(1) has five subunits: alpha(3), beta(3), gamma(1), delta(1), epsilon(1). CF(0) has three main subunits: a(1), b(2) and c(9-12). The alpha and beta chains form an alternating ring which encloses part of the gamma chain. CF(1) is attached to CF(0) by a central stalk formed by the gamma and epsilon chains, while a peripheral stalk is formed by the delta and b chains.

The protein resides in the cell membrane. It carries out the reaction ATP + H2O + 4 H(+)(in) = ADP + phosphate + 5 H(+)(out). Produces ATP from ADP in the presence of a proton gradient across the membrane. The alpha chain is a regulatory subunit. The sequence is that of ATP synthase subunit alpha from Christiangramia forsetii (strain DSM 17595 / CGMCC 1.15422 / KT0803) (Gramella forsetii).